Reading from the N-terminus, the 339-residue chain is DNA-directed RNA polymerase subunit alpha (339 aa).

The tract at residues 1–233 is alpha N-terminal domain (alpha-NTD); sequence MVREEVAGST…DLFLPFLHAE (233 aa). The tract at residues 264 to 339 is alpha C-terminal domain (alpha-CTD); sequence KKGIPLNCIF…IDLLKNKLSF (76 aa).

This sequence belongs to the RNA polymerase alpha chain family. In plastids the minimal PEP RNA polymerase catalytic core is composed of four subunits: alpha, beta, beta', and beta''. When a (nuclear-encoded) sigma factor is associated with the core the holoenzyme is formed, which can initiate transcription.

Its subcellular location is the plastid. The protein resides in the chloroplast. It catalyses the reaction RNA(n) + a ribonucleoside 5'-triphosphate = RNA(n+1) + diphosphate. In terms of biological role, DNA-dependent RNA polymerase catalyzes the transcription of DNA into RNA using the four ribonucleoside triphosphates as substrates. This Eremopyrum distans protein is DNA-directed RNA polymerase subunit alpha.